The sequence spans 643 residues: Protein RTF1 homolog (643 aa).

Disordered stretches follow at residues 1–107 (MGDL…YKNE) and 124–262 (ILSE…SDVP). G2 bears the N-acetylglycine mark. Positions 65-77 (KRLEAEREDRAAR) are enriched in basic and acidic residues. At S87 the chain carries Phosphoserine. Residues 124-157 (ILSERADKKGDKNFTEKLRSKRESEKTPVSKKET) are compositionally biased toward basic and acidic residues. The segment covering 162–171 (ASRGVRSSAR) has biased composition (low complexity). The segment covering 172-188 (SADRAAAKDDALNELRA) has biased composition (basic and acidic residues). A compositionally biased stretch (low complexity) spans 225 to 235 (SSNLSSSSQSD). The Plus3 domain occupies 261–396 (VPTFEDVKEV…KKEAIQRTNS (136 aa)).

In terms of assembly, component of the nuclear PAF1 complex (PAF1C), which consists of VIP2/ELF7/PAF1, VIP3/SKI8/WDR61, VIP4/LEO1, VIP5/RTF1, VIP6/ELF8/CTR9 and CDC73.

The protein resides in the nucleus. Component of the PAF1 complex (PAF1C) which is involved in histone modifications such as methylation on histone H3 'Lys-4' (H3K4me3). Involved in regulation of flowering time. Required for the expression of the flowering repressors and FLC and MADS-box genes of the MAF family. Involved in the control of seed dormancy and germination. The chain is Protein RTF1 homolog from Arabidopsis thaliana (Mouse-ear cress).